A 172-amino-acid polypeptide reads, in one-letter code: Adenine phosphoribosyltransferase (172 aa).

Belongs to the purine/pyrimidine phosphoribosyltransferase family. Homodimer.

It is found in the cytoplasm. The enzyme catalyses AMP + diphosphate = 5-phospho-alpha-D-ribose 1-diphosphate + adenine. Its pathway is purine metabolism; AMP biosynthesis via salvage pathway; AMP from adenine: step 1/1. Catalyzes a salvage reaction resulting in the formation of AMP, that is energically less costly than de novo synthesis. The chain is Adenine phosphoribosyltransferase from Clostridium perfringens (strain ATCC 13124 / DSM 756 / JCM 1290 / NCIMB 6125 / NCTC 8237 / Type A).